The sequence spans 201 residues: NADH-quinone oxidoreductase subunit C (201 aa).

This sequence belongs to the complex I 30 kDa subunit family. As to quaternary structure, NDH-1 is composed of 14 different subunits. Subunits NuoB, C, D, E, F, and G constitute the peripheral sector of the complex.

The protein localises to the cell inner membrane. It carries out the reaction a quinone + NADH + 5 H(+)(in) = a quinol + NAD(+) + 4 H(+)(out). Functionally, NDH-1 shuttles electrons from NADH, via FMN and iron-sulfur (Fe-S) centers, to quinones in the respiratory chain. The immediate electron acceptor for the enzyme in this species is believed to be ubiquinone. Couples the redox reaction to proton translocation (for every two electrons transferred, four hydrogen ions are translocated across the cytoplasmic membrane), and thus conserves the redox energy in a proton gradient. This Aromatoleum aromaticum (strain DSM 19018 / LMG 30748 / EbN1) (Azoarcus sp. (strain EbN1)) protein is NADH-quinone oxidoreductase subunit C.